We begin with the raw amino-acid sequence, 411 residues long: Serine hydroxymethyltransferase (411 aa).

Residues leucine 117 and 121 to 123 (GHL) each bind (6S)-5,6,7,8-tetrahydrofolate. Residue lysine 226 is modified to N6-(pyridoxal phosphate)lysine. (6S)-5,6,7,8-tetrahydrofolate contacts are provided by residues glutamate 241 and 349-351 (SPF).

Belongs to the SHMT family. As to quaternary structure, homodimer. The cofactor is pyridoxal 5'-phosphate.

It localises to the cytoplasm. The enzyme catalyses (6R)-5,10-methylene-5,6,7,8-tetrahydrofolate + glycine + H2O = (6S)-5,6,7,8-tetrahydrofolate + L-serine. Its pathway is one-carbon metabolism; tetrahydrofolate interconversion. It participates in amino-acid biosynthesis; glycine biosynthesis; glycine from L-serine: step 1/1. Its function is as follows. Catalyzes the reversible interconversion of serine and glycine with tetrahydrofolate (THF) serving as the one-carbon carrier. This reaction serves as the major source of one-carbon groups required for the biosynthesis of purines, thymidylate, methionine, and other important biomolecules. Also exhibits THF-independent aldolase activity toward beta-hydroxyamino acids, producing glycine and aldehydes, via a retro-aldol mechanism. This is Serine hydroxymethyltransferase from Macrococcus caseolyticus (strain JCSC5402) (Macrococcoides caseolyticum).